Reading from the N-terminus, the 176-residue chain is HTH-type transcriptional regulator DctR (176 aa).

The HTH luxR-type domain occupies 109 to 174; the sequence is VPEADVSLSR…ELVRHQHINY (66 aa). A DNA-binding region (H-T-H motif) is located at residues 133–152; that stretch reads TEDILEKLKISLKTFYCHKH.

Its function is as follows. May act as a transcriptional regulator of dctA. The sequence is that of HTH-type transcriptional regulator DctR (dctR) from Escherichia coli O6:H1 (strain CFT073 / ATCC 700928 / UPEC).